A 276-amino-acid polypeptide reads, in one-letter code: Putative metal-binding protein TC_0696 (276 aa).

An N-terminal signal peptide occupies residues 1–18 (MRLLILLLFSFGIIYSHG). A divalent metal cation is bound by residues His-59, His-121, His-185, and Asp-256.

This sequence belongs to the bacterial solute-binding protein 9 family.

Its subcellular location is the periplasm. Part of an ATP-binding cassette (ABC) transport system involved in metal import. Binds a metal with high affinity and specificity and delivers it to the membrane permease for translocation into the cytoplasm. The sequence is that of Putative metal-binding protein TC_0696 from Chlamydia muridarum (strain MoPn / Nigg).